Here is a 315-residue protein sequence, read N- to C-terminus: Glucokinase-like protein CC_3167 (315 aa).

Belongs to the bacterial glucokinase family.

The protein is Glucokinase-like protein CC_3167 of Caulobacter vibrioides (strain ATCC 19089 / CIP 103742 / CB 15) (Caulobacter crescentus).